Here is a 399-residue protein sequence, read N- to C-terminus: Imidazolonepropionase (399 aa).

The Fe(3+) site is built by histidine 68 and histidine 70. Zn(2+) is bound by residues histidine 68 and histidine 70. Positions 77, 140, and 173 each coordinate 4-imidazolone-5-propanoate. Position 140 (tyrosine 140) interacts with N-formimidoyl-L-glutamate. Fe(3+) is bound at residue histidine 238. Histidine 238 lines the Zn(2+) pocket. Residue glutamine 241 coordinates 4-imidazolone-5-propanoate. Aspartate 313 serves as a coordination point for Fe(3+). Aspartate 313 lines the Zn(2+) pocket. The N-formimidoyl-L-glutamate site is built by asparagine 315 and glycine 317. Residue threonine 318 coordinates 4-imidazolone-5-propanoate.

This sequence belongs to the metallo-dependent hydrolases superfamily. HutI family. Zn(2+) serves as cofactor. Requires Fe(3+) as cofactor.

The protein resides in the cytoplasm. The enzyme catalyses 4-imidazolone-5-propanoate + H2O = N-formimidoyl-L-glutamate. Its pathway is amino-acid degradation; L-histidine degradation into L-glutamate; N-formimidoyl-L-glutamate from L-histidine: step 3/3. Functionally, catalyzes the hydrolytic cleavage of the carbon-nitrogen bond in imidazolone-5-propanoate to yield N-formimidoyl-L-glutamate. It is the third step in the universal histidine degradation pathway. The sequence is that of Imidazolonepropionase from Rhizorhabdus wittichii (strain DSM 6014 / CCUG 31198 / JCM 15750 / NBRC 105917 / EY 4224 / RW1) (Sphingomonas wittichii).